The following is a 459-amino-acid chain: uncharacterized protein (459 aa).

This is an uncharacterized protein from Orgyia pseudotsugata (Douglas-fir tussock moth).